We begin with the raw amino-acid sequence, 120 residues long: MSLKIRLTRGGAKKRPYYRIVIADARAPRDGRFIDKVGAYDPMKAKDDPARIVLDNEKIQSWLAKGAQPTDRVLRFLDAAGLAKRPTRNNPQKAEPGEKAKERAAKRAEKAAAPAEDAAA.

A disordered region spans residues 81 to 120; the sequence is GLAKRPTRNNPQKAEPGEKAKERAAKRAEKAAAPAEDAAA. Over residues 95–110 the composition is skewed to basic and acidic residues; sequence EPGEKAKERAAKRAEK. Positions 111-120 are enriched in low complexity; that stretch reads AAAPAEDAAA.

It belongs to the bacterial ribosomal protein bS16 family.

The sequence is that of Small ribosomal subunit protein bS16 from Methylorubrum extorquens (strain CM4 / NCIMB 13688) (Methylobacterium extorquens).